The following is a 596-amino-acid chain: MSSRYSLRQTPRKKELFEGMVETPIRRSRSARRQTSQPLSDVETDSTVEILPQPTEVLPQPTRRRTARFKEELDSDTDSDNMGAVNRAANGKTNGHANGNGNGYTNGHGNGNGHATNGHATSNGAAPIQAVIEKTKGVSHDPHVVDGWRPGQDPKVDYSGEVEFGGSFGTAAMMTLFPVLMWYMWIGATYYDGKFPSRTEGQSWSEFGAHLANLVYTGAFPRLQVWAWYWSYLIVEGAFYCLLPGVWGYGKPLPHEGGKQLPYYCNAYWSLYTTLACLAGLHYSGIWPLYTAVDEFGPLLSVAILSGFLVSIVAYFSALWRGKQHRMTGYPIYDFFMGAELNPRMFGILDFKMFFEVRMPWYILLILSLGTAARQHEQYGYVSGEVWFLVMAHFLYANACAKGEELIITTWDMYYEKWGFMLIFWNLAGVPLSYCHCTIYLANHHPDVYRWNRGILAAMFVGYLFWYWVWDSCNSQKNRFRAMEKGKLVLRNTFPQVPWQTIHNPKTIVSPQGTILVDGWYGLARKIHYTADVWFAVSWGLITGFESPFPWFYPVFFCCMIAHRAARDIHRCRRKYGDAWLEYERRVPYLFIPYVI.

A disordered region spans residues 1 to 122 (MSSRYSLRQT…GHATNGHATS (122 aa)). Over residues 98-112 (NGNGNGYTNGHGNGN) the composition is skewed to gly residues. 8 helical membrane passes run 168–188 (FGTA…WIGA), 225–245 (VWAW…LLPG), 269–289 (WSLY…IWPL), 296–316 (FGPL…VAYF), 353–373 (MFFE…GTAA), 381–401 (YVSG…NACA), 419–439 (GFML…HCTI), and 454–474 (GILA…DSCN). Residues Lys-477, Arg-481, Leu-516, and 528–529 (HY) each bind NADP(+). A helical transmembrane segment spans residues 535-557 (FAVSWGLITGFESPFPWFYPVFF). NADP(+) contacts are provided by residues Asp-568, 572–576 (CRRKY), and Tyr-583.

The protein belongs to the ERG4/ERG24 family.

It localises to the endoplasmic reticulum membrane. The enzyme catalyses ergosterol + NADP(+) = ergosta-5,7,22,24(28)-tetraen-3beta-ol + NADPH + H(+). It functions in the pathway steroid metabolism; ergosterol biosynthesis. Its function is as follows. Delta(24(24(1)))-sterol reductase; part of the third module of ergosterol biosynthesis pathway that includes the late steps of the pathway. ERG4 catalyzes the last step of ergosterol biosynthesis by converting ergosta-5,7,22,24(28)-tetraen-3beta-ol into ergosterol. The third module or late pathway involves the ergosterol synthesis itself through consecutive reactions that mainly occur in the endoplasmic reticulum (ER) membrane. Firstly, the squalene synthase ERG9 catalyzes the condensation of 2 farnesyl pyrophosphate moieties to form squalene, which is the precursor of all steroids. Squalene synthase is crucial for balancing the incorporation of farnesyl diphosphate (FPP) into sterol and nonsterol isoprene synthesis. Secondly, squalene is converted into lanosterol by the consecutive action of the squalene epoxidase ERG1 and the lanosterol synthase ERG7. Then, the delta(24)-sterol C-methyltransferase ERG6 methylates lanosterol at C-24 to produce eburicol. Eburicol is the substrate of the sterol 14-alpha demethylase encoded by CYP51A, CYP51B and CYP51C, to yield 4,4,24-trimethyl ergosta-8,14,24(28)-trienol. CYP51B encodes the enzyme primarily responsible for sterol 14-alpha-demethylation, and plays an essential role in ascospore formation. CYP51A encodes an additional sterol 14-alpha-demethylase, induced on ergosterol depletion and responsible for the intrinsic variation in azole sensitivity. The third CYP51 isoform, CYP51C, does not encode a sterol 14-alpha-demethylase, but is required for full virulence on host wheat ears. The C-14 reductase ERG24 then reduces the C14=C15 double bond which leads to 4,4-dimethylfecosterol. A sequence of further demethylations at C-4, involving the C-4 demethylation complex containing the C-4 methylsterol oxidases ERG25, the sterol-4-alpha-carboxylate 3-dehydrogenase ERG26 and the 3-keto-steroid reductase ERG27, leads to the production of fecosterol via 4-methylfecosterol. ERG28 has a role as a scaffold to help anchor ERG25, ERG26 and ERG27 to the endoplasmic reticulum. The C-8 sterol isomerase ERG2 then catalyzes the reaction which results in unsaturation at C-7 in the B ring of sterols and thus converts fecosterol to episterol. The sterol-C5-desaturases ERG3A and ERG3BB then catalyze the introduction of a C-5 double bond in the B ring to produce 5-dehydroepisterol. The C-22 sterol desaturases ERG5A and ERG5B further convert 5-dehydroepisterol into ergosta-5,7,22,24(28)-tetraen-3beta-ol by forming the C-22(23) double bond in the sterol side chain. Finally, ergosta-5,7,22,24(28)-tetraen-3beta-ol is substrate of the C-24(28) sterol reductase ERG4 to produce ergosterol. This chain is Delta(24(24(1)))-sterol reductase, found in Gibberella zeae (strain ATCC MYA-4620 / CBS 123657 / FGSC 9075 / NRRL 31084 / PH-1) (Wheat head blight fungus).